The chain runs to 221 residues: MLTDLRLYQLISPSLPVGAFTYSQGLEWAIEKGWVKDEQSLALWLTSQMQGSLATLEIPILIQLHHLLGVQNYEKAQYWCDFIVASRETKELRIEERQRGAAFAKLLPQLGIDLSERTFPLVNQTQVAAFALAAEKWEIPLVKLCSAYMWSWLENAVMAGVKLIPLGQTAGQKLLIDLTKFVPEVIEKSMRWPCDRIGSFTPAQVIASCQHETQYTRLFRS.

Belongs to the UreF family. UreD, UreF and UreG form a complex that acts as a GTP-hydrolysis-dependent molecular chaperone, activating the urease apoprotein by helping to assemble the nickel containing metallocenter of UreC. The UreE protein probably delivers the nickel.

The protein localises to the cytoplasm. Required for maturation of urease via the functional incorporation of the urease nickel metallocenter. This Vibrio parahaemolyticus protein is Urease accessory protein UreF.